The sequence spans 163 residues: Globin CTT-Z (163 aa).

A signal peptide spans 1–16 (MKFFAVLALCIVGAIA). Residues 18-162 (PLTSDEAALV…VYTAVFQIVT (145 aa)) enclose the Globin domain. Positions 76 and 111 each coordinate heme b.

This sequence belongs to the globin family.

This is Globin CTT-Z (CTT-Z) from Chironomus thummi piger (Midge).